The chain runs to 151 residues: D-aminoacyl-tRNA deacylase (151 aa).

The short motif at 136-137 (GP) is the Gly-cisPro motif, important for rejection of L-amino acids element.

It belongs to the DTD family. Homodimer.

It is found in the cytoplasm. The catalysed reaction is glycyl-tRNA(Ala) + H2O = tRNA(Ala) + glycine + H(+). The enzyme catalyses a D-aminoacyl-tRNA + H2O = a tRNA + a D-alpha-amino acid + H(+). In terms of biological role, an aminoacyl-tRNA editing enzyme that deacylates mischarged D-aminoacyl-tRNAs. Also deacylates mischarged glycyl-tRNA(Ala), protecting cells against glycine mischarging by AlaRS. Acts via tRNA-based rather than protein-based catalysis; rejects L-amino acids rather than detecting D-amino acids in the active site. By recycling D-aminoacyl-tRNA to D-amino acids and free tRNA molecules, this enzyme counteracts the toxicity associated with the formation of D-aminoacyl-tRNA entities in vivo and helps enforce protein L-homochirality. This Lactococcus lactis subsp. cremoris (strain MG1363) protein is D-aminoacyl-tRNA deacylase.